Reading from the N-terminus, the 1250-residue chain is Bifunctional autolysin (1250 aa).

The signal sequence occupies residues 1–29 (MAKKFNYKLPSMVALTLVGSAVTAHQVQA). Polar residues predominate over residues 103 to 138 (GDTRANQSATTNNTQPVAKSTSTTAPKTNTNVTNAG). Disordered stretches follow at residues 103–151 (GDTR…NSEN) and 173–219 (AAAP…KYKP). The span at 173–196 (AAAPKAATTSAPKAKTEATPKVTT) shows a compositional bias: low complexity. An N-acetylmuramoyl-L-alanine amidase region spans residues 199–769 (ASAQPRSVAA…AVAQPKTAVK (571 aa)). GW domains follow at residues 437 to 511 (TVAA…YNTA), 513 to 587 (SPVN…DTAK), 606 to 680 (TVSS…YNNA), 682 to 756 (SPVN…VPAA), 778 to 853 (TTQT…VQNL), 855 to 930 (KEVK…APTA), and 937 to 1011 (AAKD…KELI). The endo-beta-N-acetylglucosaminidase stretch occupies residues 770–1250 (AYTVTKPQTT…GKYFDIPQYK (481 aa)).

The protein in the N-terminal section; belongs to the N-acetylmuramoyl-L-alanine amidase 2 family. This sequence in the C-terminal section; belongs to the glycosyl hydrolase 73 family. As to quaternary structure, oligomer; forms a ring structure at the cell surface which is important for efficient partitioning of daughter cells after cell division. In terms of processing, undergoes proteolytic processing to generate the two extracellular lytic enzymes, probably at the septal region on the cell surface.

It is found in the secreted. It carries out the reaction Hydrolyzes the link between N-acetylmuramoyl residues and L-amino acid residues in certain cell-wall glycopeptides.. The catalysed reaction is an N(4)-(oligosaccharide-(1-&gt;3)-[oligosaccharide-(1-&gt;6)]-beta-D-Man-(1-&gt;4)-beta-D-GlcNAc-(1-&gt;4)-alpha-D-GlcNAc)-L-asparaginyl-[protein] + H2O = an oligosaccharide-(1-&gt;3)-[oligosaccharide-(1-&gt;6)]-beta-D-Man-(1-&gt;4)-D-GlcNAc + N(4)-(N-acetyl-beta-D-glucosaminyl)-L-asparaginyl-[protein]. In terms of biological role, endohydrolysis of the di-N-acetylchitobiosyl unit in high-mannose glycopeptides and glycoproteins containing the -[(Man)5(GlcNAc)2]-Asn structure. One N-acetyl-D-glucosamine residue remains attached to the protein; the rest of the oligosaccharide is released intact. Cleaves the peptidoglycan connecting the daughter cells at the end of the cell division cycle, resulting in the separation of the two newly divided cells. Acts as an autolysin in penicillin-induced lysis. This is Bifunctional autolysin (atl) from Staphylococcus aureus (strain MSSA476).